The following is a 186-amino-acid chain: Adenine phosphoribosyltransferase (186 aa).

It belongs to the purine/pyrimidine phosphoribosyltransferase family. In terms of assembly, homodimer.

The protein localises to the cytoplasm. It carries out the reaction AMP + diphosphate = 5-phospho-alpha-D-ribose 1-diphosphate + adenine. It participates in purine metabolism; AMP biosynthesis via salvage pathway; AMP from adenine: step 1/1. Functionally, catalyzes a salvage reaction resulting in the formation of AMP, that is energically less costly than de novo synthesis. The polypeptide is Adenine phosphoribosyltransferase (Xanthomonas campestris pv. campestris (strain 8004)).